A 544-amino-acid polypeptide reads, in one-letter code: Putative pentatricopeptide repeat-containing protein At5g59200, chloroplastic (544 aa).

The interval 1–21 (MISSLAAITGGPSTFRRDPDS) is disordered. A chloroplast-targeting transit peptide spans 1-25 (MISSLAAITGGPSTFRRDPDSNTLR). PPR repeat units lie at residues 60 to 90 (DAFV…VSNP), 91 to 125 (NVYL…SVLP), 127 to 156 (NYVI…GFGS), 157 to 187 (SRSV…MPDR), 188 to 218 (DHVA…VKIK), 219 to 253 (DTVC…NVSA), 254 to 288 (NEFT…RMEL), 289 to 319 (SNFV…MRDK), 320 to 354 (DVIS…GFRP), 355 to 385 (NQVT…MKRV), and 391 to 421 (QIEH…IPIE). A type E motif region spans residues 426–501 (MLGTLLSACK…EPGCSTIEVD (76 aa)). The tract at residues 502-532 (NQIHEFLVGDIAHPHKEAIYQRLQELNRILR) is type E(+) motif.

This sequence belongs to the PPR family. PCMP-E subfamily.

The protein localises to the plastid. It localises to the chloroplast. In terms of biological role, involved in RNA editing event in chloroplasts. Required for the editing of a single site in rpl23 transcript. This Arabidopsis thaliana (Mouse-ear cress) protein is Putative pentatricopeptide repeat-containing protein At5g59200, chloroplastic (PCMP-E41).